The primary structure comprises 475 residues: Ribulose bisphosphate carboxylase large chain (475 aa).

Residues 1 to 2 (MS) constitute a propeptide that is removed on maturation. N-acetylproline is present on Pro-3. Lys-14 carries the post-translational modification N6,N6,N6-trimethyllysine. Substrate is bound by residues Asn-123 and Thr-173. Lys-175 (proton acceptor) is an active-site residue. Lys-177 is a substrate binding site. Mg(2+) is bound by residues Lys-201, Asp-203, and Glu-204. Residue Lys-201 is modified to N6-carboxylysine. His-294 functions as the Proton acceptor in the catalytic mechanism. Positions 295, 327, and 379 each coordinate substrate.

The protein belongs to the RuBisCO large chain family. Type I subfamily. As to quaternary structure, heterohexadecamer of 8 large chains and 8 small chains; disulfide-linked. The disulfide link is formed within the large subunit homodimers. Requires Mg(2+) as cofactor. Post-translationally, the disulfide bond which can form in the large chain dimeric partners within the hexadecamer appears to be associated with oxidative stress and protein turnover.

It localises to the plastid. The protein resides in the chloroplast. It catalyses the reaction 2 (2R)-3-phosphoglycerate + 2 H(+) = D-ribulose 1,5-bisphosphate + CO2 + H2O. The catalysed reaction is D-ribulose 1,5-bisphosphate + O2 = 2-phosphoglycolate + (2R)-3-phosphoglycerate + 2 H(+). RuBisCO catalyzes two reactions: the carboxylation of D-ribulose 1,5-bisphosphate, the primary event in carbon dioxide fixation, as well as the oxidative fragmentation of the pentose substrate in the photorespiration process. Both reactions occur simultaneously and in competition at the same active site. The protein is Ribulose bisphosphate carboxylase large chain of Ostrya virginiana (American hophornbeam).